The following is a 179-amino-acid chain: Transmembrane protein 196 (179 aa).

Transmembrane regions (helical) follow at residues 11–31, 44–61, 67–87, and 100–120; these read LLVL…VGAV, LGDS…ILCA, LVMI…ILNF, and LYPL…GCTL.

It localises to the cytoplasm. The protein resides in the membrane. Functionally, acts as a tumor suppressor in lung cancer. Inhibits tumor cell growth by inhibiting cell proliferation and migration and promoting cell apoptosis. Inhibits metastasis of lung cancer by suppressing beta-catenin expression in the Wnt/beta-catenin signaling pathway. The chain is Transmembrane protein 196 (TMEM196) from Pongo abelii (Sumatran orangutan).